A 124-amino-acid polypeptide reads, in one-letter code: Acidic phospholipase A2 BA1 (124 aa).

7 disulfide bridges follow: C26–C116, C28–C44, C43–C95, C49–C124, C50–C88, C57–C81, and C75–C86. Positions 27, 29, and 31 each coordinate Ca(2+). H47 is a catalytic residue. D48 lines the Ca(2+) pocket. D89 is an active-site residue.

This sequence belongs to the phospholipase A2 family. Group II subfamily. D49 sub-subfamily. Requires Ca(2+) as cofactor. In terms of tissue distribution, expressed by the venom gland.

It is found in the secreted. The catalysed reaction is a 1,2-diacyl-sn-glycero-3-phosphocholine + H2O = a 1-acyl-sn-glycero-3-phosphocholine + a fatty acid + H(+). Functionally, PLA2 catalyzes the calcium-dependent hydrolysis of the 2-acyl groups in 3-sn-phosphoglycerides. The polypeptide is Acidic phospholipase A2 BA1 (Gloydius halys (Chinese water mocassin)).